Here is a 309-residue protein sequence, read N- to C-terminus: Protein FdhE homolog (309 aa).

Belongs to the FdhE family.

The protein resides in the cytoplasm. Necessary for formate dehydrogenase activity. The sequence is that of Protein FdhE homolog from Yersinia pestis bv. Antiqua (strain Antiqua).